We begin with the raw amino-acid sequence, 990 residues long: Fibronectin-binding protein A (990 aa).

The first 35 residues, 1–35, serve as a signal peptide directing secretion; it reads MKNNLRYGIRKHKLGAASVFLGTMIVVGMGQDKEA. The YSIRK-G/S signaling motif motif lies at 7–18; the sequence is YGIRKHKLGAAS. Disordered stretches follow at residues 33-61 and 96-193; these read KEAA…SETQ and PKAV…TEVK. Polar residues predominate over residues 37–55; sequence TSEQKTTTVEENGNSATDN. Positions 37–511 are ligand-binding A region; it reads TSEQKTTTVE…SNKADGNGKN (475 aa). 2 stretches are compositionally biased toward basic and acidic residues: residues 112–126 and 179–193; these read TVKE…KPQV and DVAE…TEVK. Residues 194–511 form a fibrinogen/elastin/tropoelastin-binding region; it reads GTDVTSKVTV…SNKADGNGKN (318 aa). A fibronectin-binding region spans residues 512-834; that stretch reads GQIIQNNDFE…EGQQTIEEDT (323 aa). The stretch at 545–574 is one B-1 repeat; that stretch reads ENQDNTPLDIDYHTAIDGEGGYADGYIETI. Residues 545–604 form a 2 X approximate tandem repeats region; the sequence is ENQDNTPLDIDYHTAIDGEGGYADGYIETIEETDSSAIDIDYHTAVDSEAGHVGGYTESS. A B-2 repeat occupies 575-604; sequence EETDSSAIDIDYHTAVDSEAGHVGGYTESS. The segment at 702–969 is disordered; sequence LGYEGGQNSG…EESTNKGMLF (268 aa). The D-1 repeat unit spans residues 707–744; that stretch reads GQNSGNQSFEEDTEEDKPKYEQGGNIVDIDFDSVPQIQ. The 4 X approximate tandem repeats stretch occupies residues 707–850; sequence GQNSGNQSFE…TPEVPSEPET (144 aa). The span at 741–752 shows a compositional bias: polar residues; it reads PQIQGQNNGNQS. The stretch at 745–782 is one D-2 repeat; it reads GQNNGNQSFEEDTEKDKPKYEQGGNIIDIDFDSVPQIH. Residues 783-821 form a D-3 repeat; the sequence is GFNKHNEIIEEDTNKDKPNYQFGGHNSVDFEEDTLPKVS. Residues 786-800 show a composition bias toward basic and acidic residues; it reads KHNEIIEEDTNKDKP. The D-4; truncated repeat unit spans residues 822–850; the sequence is GQNEGQQTIEEDTTPPTPPTPEVPSEPET. Residues 836–910 are compositionally biased toward pro residues; it reads PPTPPTPEVP…PAEPGKPVPP (75 aa). WR repeat units lie at residues 851–864, 865–878, 879–892, 893–906, and 907–920; these read PTPP…EPET, PTPP…EPGK, and PVPP…KPSK. The segment at 851–920 is 5 X tandem repeats, Pro-rich (WR); it reads PTPPTPEVPS…AEEEPKKPSK (70 aa). Residues 954-958 carry the LPXTG sorting signal motif; it reads LPETG. T957 is modified (pentaglycyl murein peptidoglycan amidated threonine). A propeptide spans 958-990 (removed by sortase); that stretch reads GGEESTNKGMLFGGLFSILGLALLRRNKKNHKA.

It is found in the secreted. The protein localises to the cell wall. Functionally, promotes bacterial attachment to multiple substrates, such as fibronectin (Fn), fibrinogen (Fg), elastin peptides and tropoelastin. This confers to S.aureus the ability to invade endothelial cells. Promotes adherence to and aggregation of activated platelets. This Staphylococcus aureus (strain bovine RF122 / ET3-1) protein is Fibronectin-binding protein A (fnbA).